The following is a 329-amino-acid chain: Probable endo-beta-1,4-glucanase B (329 aa).

The N-terminal stretch at methionine 1–alanine 18 is a signal peptide. Asparagine 33 and asparagine 96 each carry an N-linked (GlcNAc...) asparagine glycan. The active-site Proton donor is glutamate 156. The active-site Nucleophile is glutamate 263.

The protein belongs to the glycosyl hydrolase 5 (cellulase A) family.

Its subcellular location is the secreted. The catalysed reaction is Endohydrolysis of (1-&gt;4)-beta-D-glucosidic linkages in cellulose, lichenin and cereal beta-D-glucans.. Functionally, has endoglucanase activity on substrates containing beta-1,4 glycosidic bonds, like in carboxymethylcellulose (CMC), hydroxyethylcellulose (HEC) and beta-glucan. Involved in the degradation of complex natural cellulosic substrates. This chain is Probable endo-beta-1,4-glucanase B (eglB), found in Neosartorya fischeri (strain ATCC 1020 / DSM 3700 / CBS 544.65 / FGSC A1164 / JCM 1740 / NRRL 181 / WB 181) (Aspergillus fischerianus).